Reading from the N-terminus, the 446-residue chain is uncharacterized protein (446 aa).

Positions 141-282 (TEAETNGTRP…GPKPKVKRVS (142 aa)) are disordered. A compositionally biased stretch (polar residues) spans 159 to 170 (NSGSKPKAGTQS). Positions 194–210 (IKSERRSISQGGEKDKA) are enriched in basic and acidic residues. Serine 200, serine 202, serine 212, and serine 214 each carry phosphoserine. Composition is skewed to low complexity over residues 211 to 221 (SSSSPSSSQQS) and 229 to 239 (SPSQQNSRSSS). Serine 251 carries the post-translational modification Phosphoserine. The span at 269-280 (GKSRGPKPKVKR) shows a compositional bias: basic residues. Residues serine 282 and serine 307 each carry the phosphoserine modification.

This is an uncharacterized protein from Drosophila melanogaster (Fruit fly).